A 52-amino-acid polypeptide reads, in one-letter code: Ornatin-C (52 aa).

Residues 42–44 carry the Cell attachment site motif; it reads RGD.

This sequence belongs to the ornatin family.

It is found in the secreted. Functionally, potent inhibitor of fibrinogen interaction with platelet receptors expressed on glycoprotein IIb-IIIa complex. May prevent blood from clotting during either feeding and/or storage of ingested blood. The chain is Ornatin-C from Placobdella ornata (Turtle leech).